The primary structure comprises 637 residues: MSQQETHGFQTEVKQLLHLMIHSLYSNKEIFLRELVSNAADAADKLRYLALTNDALYEGDGELRVRISADKEKGTVTIEDNGVGMTRDGVIEHLGTIAKSGTADFFKNLSGESSKDSQLIGQFGVGFYSAFIVAKKVTVRTRAAGHKADEAVLWESEGEGNFTVDTITKASRGTEITLHLRDEEKEFADDWRLRSIITKYSDHISVPVEMWQEGTPESDGADGEKIPATEGQWKVMNKATALWMRSKADISDEEYQEFYKHISHDYTDALLWSHNRVEGKQEYTNLLYIPAKAPWDMWNRDRKHGLKLFVQRVFIMDDAEQFMPSYLRFVQGLIDSNDLPLNVSREILQDNHVTKAMRTGITKRVLGMLEKLAKDDAEKYQQFWAEFGQVLKEGPAEDFANRERIAGLLRFASTHTGSAAPTVSLDDYISRMKEGQTKIYYIVADSHEAAANSPHLELLRKKGIEVLLMSERIDEWLINHLTEYKEKQLHSVTRGDLELGELEDAAEKEAQEKLEQESVALVERIKAALGSSVADVKVTSRLTDTPACVVAGDGEMSTQMIKLMQAAGQPVPEVKPTFEINPAHPLVSRLNDLQDETAFADWSNLLLQQAQLSEKGSLADPSAFIKLMNQMLLANMK.

Residues 1-345 form an a; substrate-binding region; it reads MSQQETHGFQ…SNDLPLNVSR (345 aa). Positions 346-562 are b; it reads EILQDNHVTK…DGEMSTQMIK (217 aa). Residues 563-637 form a c region; that stretch reads LMQAAGQPVP…MNQMLLANMK (75 aa).

The protein belongs to the heat shock protein 90 family. In terms of assembly, homodimer.

The protein resides in the cytoplasm. Molecular chaperone. Has ATPase activity. The protein is Chaperone protein HtpG of Shewanella baltica (strain OS155 / ATCC BAA-1091).